The following is a 488-amino-acid chain: Replication-associated protein (488 aa).

The tract at residues 462 to 488 is disordered; sequence PRPRQMQRSATEHNLFQYARSGRDPTS.

The protein resides in the host nucleus. Plays an essential for the replication of viral DNA. Presumably cleaves viral genomic dsRNA replicative form to initiate rolling circle replication. This Chaetoceros diatodnavirus 1 (Chaetoceros setoense DNA virus) protein is Replication-associated protein.